Reading from the N-terminus, the 384-residue chain is 8-amino-7-oxononanoate synthase (384 aa).

Arginine 21 is a substrate binding site. 108 to 109 (GF) lines the pyridoxal 5'-phosphate pocket. Histidine 133 lines the substrate pocket. Serine 179, histidine 207, and threonine 233 together coordinate pyridoxal 5'-phosphate. An N6-(pyridoxal phosphate)lysine modification is found at lysine 236. Threonine 352 contributes to the substrate binding site.

The protein belongs to the class-II pyridoxal-phosphate-dependent aminotransferase family. BioF subfamily. In terms of assembly, homodimer. The cofactor is pyridoxal 5'-phosphate.

It catalyses the reaction 6-carboxyhexanoyl-[ACP] + L-alanine + H(+) = (8S)-8-amino-7-oxononanoate + holo-[ACP] + CO2. It participates in cofactor biosynthesis; biotin biosynthesis. In terms of biological role, catalyzes the decarboxylative condensation of pimeloyl-[acyl-carrier protein] and L-alanine to produce 8-amino-7-oxononanoate (AON), [acyl-carrier protein], and carbon dioxide. This is 8-amino-7-oxononanoate synthase from Escherichia fergusonii (strain ATCC 35469 / DSM 13698 / CCUG 18766 / IAM 14443 / JCM 21226 / LMG 7866 / NBRC 102419 / NCTC 12128 / CDC 0568-73).